Reading from the N-terminus, the 166-residue chain is Large ribosomal subunit protein uL10 (166 aa).

Belongs to the universal ribosomal protein uL10 family. As to quaternary structure, part of the ribosomal stalk of the 50S ribosomal subunit. The N-terminus interacts with L11 and the large rRNA to form the base of the stalk. The C-terminus forms an elongated spine to which L12 dimers bind in a sequential fashion forming a multimeric L10(L12)X complex.

Functionally, forms part of the ribosomal stalk, playing a central role in the interaction of the ribosome with GTP-bound translation factors. The sequence is that of Large ribosomal subunit protein uL10 from Pseudomonas entomophila (strain L48).